The following is a 1690-amino-acid chain: Restin homolog (1690 aa).

2 stretches are compositionally biased toward polar residues: residues 1–11 (MSDDTSASGGT) and 39–51 (NIPT…TGIP). The segment at 1 to 105 (MSDDTSASGG…ESDDNLSSIN (105 aa)) is disordered. A phosphoserine mark is found at S64 and S67. The region spanning 143–185 (GDTHFAAGEWAGVVLDEPNGKNDGCVSGKRYFQCEPKRGIFSR) is the CAP-Gly 1 domain. Positions 195 to 227 (AGAQTPTSPLAKSSPDRSRTVSPTASIRSSMLR) are disordered. Over residues 214 to 226 (TVSPTASIRSSML) the composition is skewed to polar residues. S216 is subject to Phosphoserine. The region spanning 260–302 (GETQFAPGNWCGVELDEPSGKNDGTVDDIRYFECKPKYGVFVP) is the CAP-Gly 2 domain. 3 positions are modified to phosphoserine: S309, S322, and S325. T327 carries the phosphothreonine modification. S328 carries the post-translational modification Phosphoserine. Residue T362 is modified to Phosphothreonine. Coiled-coil stretches lie at residues 378-468 (QHVE…VSAT), 484-660 (GALQ…DMLR), 667-916 (EEKS…TKLK), 926-981 (LSSC…ELQA), 1001-1121 (ATGH…EAIQ), 1158-1549 (EADM…AQMN), and 1565-1600 (DIET…LETL). A disordered region spans residues 843 to 905 (QQAAASGEEG…GSLEEEAKKS (63 aa)). The segment covering 865 to 885 (QLKSQAEETQSELKSTQSNLE) has biased composition (polar residues). Disordered regions lie at residues 1031–1052 (QLQD…KEKS) and 1400–1419 (KLDE…NEIQ). Composition is skewed to basic and acidic residues over residues 1040–1052 (TKLK…KEKS) and 1410–1419 (SQKKSHNEIQ). The interval 1635 to 1665 (TEDCPIQGSEDQDYSTPSSESNNNEKERKLP) is disordered. T1681 carries the phosphothreonine modification. Position 1682 is a phosphoserine (S1682).

Interacts with Lva. Specifically expressed at the tip of the furrow in cellularizing blastoderms. CLIP-190 and jar are coexpressed at several times in development and in a number of tissues, including embryonic axonal neuron processes and posterior pole.

It is found in the cytoplasm. The protein resides in the cytoskeleton. The protein localises to the golgi apparatus. It localises to the microtubule organizing center. Its subcellular location is the perinuclear region. Functionally, together CLIP-190 and jar may coordinate the interaction between the actin and microtubule cytoskeleton. May link endocytic vesicles to microtubules. May play a role in formation of furrows during cellularization. The chain is Restin homolog (CLIP-190) from Drosophila melanogaster (Fruit fly).